The chain runs to 424 residues: Probable threonylcarbamoyladenosine tRNA methylthiotransferase (424 aa).

Residues 4-115 enclose the MTTase N-terminal domain; it reads IRVYIETFGC…APQAVRAASN (112 aa). [4Fe-4S] cluster is bound by residues C13, C48, C79, C150, C154, and C157. Positions 136–365 constitute a Radical SAM core domain; that stretch reads RSNPLIHIIP…EELKMRITEE (230 aa). Residues 368-424 enclose the TRAM domain; sequence RRLVGSFQEILVVERGRKGGFIGRTGSYIPVVTETGEPGSFRRVRIRDATGTYLLAD.

The protein belongs to the methylthiotransferase family. CDKAL1 subfamily. [4Fe-4S] cluster serves as cofactor.

The catalysed reaction is N(6)-L-threonylcarbamoyladenosine(37) in tRNA + (sulfur carrier)-SH + AH2 + 2 S-adenosyl-L-methionine = 2-methylsulfanyl-N(6)-L-threonylcarbamoyladenosine(37) in tRNA + (sulfur carrier)-H + 5'-deoxyadenosine + L-methionine + A + S-adenosyl-L-homocysteine + 2 H(+). In terms of biological role, catalyzes the methylthiolation of N6-threonylcarbamoyladenosine (t(6)A), leading to the formation of 2-methylthio-N6-threonylcarbamoyladenosine (ms(2)t(6)A) at position 37 in tRNAs that read codons beginning with adenine. This is Probable threonylcarbamoyladenosine tRNA methylthiotransferase from Methanothermobacter thermautotrophicus (strain ATCC 29096 / DSM 1053 / JCM 10044 / NBRC 100330 / Delta H) (Methanobacterium thermoautotrophicum).